Here is a 218-residue protein sequence, read N- to C-terminus: Large ribosomal subunit protein uL3 (218 aa).

This sequence belongs to the universal ribosomal protein uL3 family. As to quaternary structure, part of the 50S ribosomal subunit. Forms a cluster with proteins L14 and L19.

One of the primary rRNA binding proteins, it binds directly near the 3'-end of the 23S rRNA, where it nucleates assembly of the 50S subunit. This Syntrophus aciditrophicus (strain SB) protein is Large ribosomal subunit protein uL3.